Consider the following 369-residue polypeptide: Probable N-acetyltransferase 16 (369 aa).

The tract at residues 1 to 49 (MKLEASCGTATSEVPKPEKKTARDAEPSSETRPQEVEAEPRSGSGPEAE) is disordered. The span at 15–26 (PKPEKKTARDAE) shows a compositional bias: basic and acidic residues. An N-acetyltransferase domain is found at 53-188 (LDFVVATERE…QGILLVRFNA (136 aa)).

In terms of biological role, probable N-acetyltransferase. Shows only trace activity toward L-His and no N-acetyltransferase activity toward other amino acids. The physiological substrate of this enzyme is unknown. This Homo sapiens (Human) protein is Probable N-acetyltransferase 16 (NAT16).